The chain runs to 637 residues: 1-deoxy-D-xylulose-5-phosphate synthase 1 (637 aa).

Residues His-74 and 115 to 117 (GHS) contribute to the thiamine diphosphate site. Asp-146 is a binding site for Mg(2+). Residues 147–148 (GS), Asn-175, Tyr-286, and Glu-368 each bind thiamine diphosphate. Position 175 (Asn-175) interacts with Mg(2+).

Belongs to the transketolase family. DXPS subfamily. In terms of assembly, homodimer. It depends on Mg(2+) as a cofactor. Requires thiamine diphosphate as cofactor.

The catalysed reaction is D-glyceraldehyde 3-phosphate + pyruvate + H(+) = 1-deoxy-D-xylulose 5-phosphate + CO2. The protein operates within metabolic intermediate biosynthesis; 1-deoxy-D-xylulose 5-phosphate biosynthesis; 1-deoxy-D-xylulose 5-phosphate from D-glyceraldehyde 3-phosphate and pyruvate: step 1/1. In terms of biological role, catalyzes the acyloin condensation reaction between C atoms 2 and 3 of pyruvate and glyceraldehyde 3-phosphate to yield 1-deoxy-D-xylulose-5-phosphate (DXP). This Geobacter sulfurreducens (strain ATCC 51573 / DSM 12127 / PCA) protein is 1-deoxy-D-xylulose-5-phosphate synthase 1.